Reading from the N-terminus, the 339-residue chain is MSLQVQPQVSLKPFNTFGVDVRAQLFAEAHSDADVREALAYASAHDVPLLVIGGGSNLLLTADIPALVLRMASRGIRVISDDGNRVVIEAEAGEPWHPFVQHTLAQGFSGLENLSLIPGTVGAAPMQNIGAYGVEIKDVFAGLTALDRQTGELRDFSLEECRFAYRDSVFKQQPGRWLILRVRFALNRVAHLHLEYGPVRQRLTEQGIEQPTPTDVSRAICSIRSEKLPDPAVLGNAGSFFKNPLVSAAVVAQIKAQHPDLVAYAQPDGQMKLAAGWLIERAGWKGFREADAGVHKLQALVLVNYGAATGLQLLDLAQRIQKDIAERFNVELEMEPNRY.

The FAD-binding PCMH-type domain maps to 19 to 189; sequence VDVRAQLFAE…LRVRFALNRV (171 aa). Arginine 166 is a catalytic residue. The active-site Proton donor is the serine 239. Glutamate 335 is a catalytic residue.

It belongs to the MurB family. It depends on FAD as a cofactor.

Its subcellular location is the cytoplasm. It carries out the reaction UDP-N-acetyl-alpha-D-muramate + NADP(+) = UDP-N-acetyl-3-O-(1-carboxyvinyl)-alpha-D-glucosamine + NADPH + H(+). Its pathway is cell wall biogenesis; peptidoglycan biosynthesis. Cell wall formation. This Pseudomonas fluorescens (strain Pf0-1) protein is UDP-N-acetylenolpyruvoylglucosamine reductase.